The primary structure comprises 227 residues: Venom allergen 5.01 (227 aa).

The signal sequence occupies residues 1–23; sequence MEIGGLVYLILIITIINLSFGET. 4 cysteine pairs are disulfide-bonded: Cys-27–Cys-39, Cys-31–Cys-124, Cys-49–Cys-117, and Cys-193–Cys-210. The 145-residue stretch at 68-212 folds into the SCP domain; sequence LKRHNDFRQN…WYTHYLVCNY (145 aa).

Belongs to the CRISP family. Venom allergen 5-like subfamily. Expressed by the venom gland.

It is found in the secreted. The chain is Venom allergen 5.01 from Dolichovespula maculata (Bald-faced hornet).